A 723-amino-acid chain; its full sequence is E3 ubiquitin-protein ligase LRSAM1 (723 aa).

6 LRR repeats span residues 30 to 51 (ADDILDISKCELSEIPFGAFAT), 56 to 77 (QKKVLIVHTNHLTSLLPKSCSL), 82 to 103 (TIKVLDLHDNQLTALPDDLGQL), 105 to 127 (ALQVLNVERNQLMQLPRSIGNLT), 128 to 149 (QLQTLNVKDNKLKELPDTVGEL), and 151 to 172 (SLRTLNISGNEIQRLPQMLAHV). Ser-234 bears the Phosphoserine mark. 2 coiled-coil regions span residues 254-380 (SDYE…TESL) and 510-562 (ALSS…KPLS). The disordered stretch occupies residues 282–314 (TQLLQQSSSQKDEILQTVKEEQSRLEQGLSEHQ). Over residues 291–314 (QKDEILQTVKEEQSRLEQGLSEHQ) the composition is skewed to basic and acidic residues. The SAM domain occupies 569–632 (GMERQLVALL…LRRVQELLDA (64 aa)). A Phosphoserine modification is found at Ser-604. Residues 642 to 665 (PMGEVVTPTAPQEPPESVRPSAPP) form a disordered region. 2 consecutive short sequence motifs (PTAP motif) follow at residues 649–652 (PTAP) and 661–664 (PSAP). The RING-type zinc-finger motif lies at 675 to 710 (CVVCLEREAQMIFLNCGHVCCCQQCCQPLRTCPLCR).

As to quaternary structure, interacts with TSG101. Interacts with PHF23. Interacts with FUS. In terms of processing, ubiquitination promoted by PHF23 leads to proteasomal degradation. In terms of tissue distribution, highly expressed in adult spinal cord motoneurons as well as in fetal spinal cord and muscle tissue.

The protein resides in the cytoplasm. It carries out the reaction S-ubiquitinyl-[E2 ubiquitin-conjugating enzyme]-L-cysteine + [acceptor protein]-L-lysine = [E2 ubiquitin-conjugating enzyme]-L-cysteine + N(6)-ubiquitinyl-[acceptor protein]-L-lysine.. It participates in protein modification; protein ubiquitination. Functionally, E3 ubiquitin-protein ligase that mediates monoubiquitination of TSG101 at multiple sites, leading to inactivate the ability of TSG101 to sort endocytic (EGF receptors) and exocytic (HIV-1 viral proteins) cargos. Bacterial recognition protein that defends the cytoplasm from invasive pathogens. Localizes to several intracellular bacterial pathogens and generates the bacteria-associated ubiquitin signal leading to autophagy-mediated intracellular bacteria degradation (xenophagy). The chain is E3 ubiquitin-protein ligase LRSAM1 from Homo sapiens (Human).